The sequence spans 626 residues: ABC transporter G family member 8 (626 aa).

Positions 56 to 300 constitute an ABC transporter domain; sequence VNLDNKTENS…SLGYPCPNNT (245 aa). 90-97 is an ATP binding site; sequence GPSGSGKS. The ABC transmembrane type-2 domain occupies 373–621; sequence GNALSRVITA…SLSYFALHFL (249 aa). Helical transmembrane passes span 376–396, 409–429, 447–467, 485–505, 515–535, 543–563, and 600–620; these read LSRVITAIVIGALFGSCFAGL, TLFFLTTGLMLSPFSMITLFL, FPYFLSMITVELTIEFFVTLV, FFFAVLVYSFIHSLSTFFISS, LTFSYASSLSVVFMLFAGFYV, AFGWLHWVNPAFYGYSSVVIN, and FGVLVAWATFFYSLSYFALHF.

It belongs to the ABC transporter superfamily. ABCG family. Eye pigment precursor importer (TC 3.A.1.204) subfamily.

It is found in the membrane. This chain is ABC transporter G family member 8 (abcG8), found in Dictyostelium discoideum (Social amoeba).